A 281-amino-acid chain; its full sequence is NADPH-dependent 7-cyano-7-deazaguanine reductase (281 aa).

88 to 90 (VES) is a substrate binding site. 90–91 (SK) serves as a coordination point for NADPH. The active-site Thioimide intermediate is cysteine 189. Aspartate 196 acts as the Proton donor in catalysis. 228–229 (HE) is a substrate binding site. 257-258 (RG) is a binding site for NADPH.

It belongs to the GTP cyclohydrolase I family. QueF type 2 subfamily. Homodimer.

It localises to the cytoplasm. The catalysed reaction is 7-aminomethyl-7-carbaguanine + 2 NADP(+) = 7-cyano-7-deazaguanine + 2 NADPH + 3 H(+). It participates in tRNA modification; tRNA-queuosine biosynthesis. Functionally, catalyzes the NADPH-dependent reduction of 7-cyano-7-deazaguanine (preQ0) to 7-aminomethyl-7-deazaguanine (preQ1). In Cronobacter sakazakii (strain ATCC BAA-894) (Enterobacter sakazakii), this protein is NADPH-dependent 7-cyano-7-deazaguanine reductase.